The sequence spans 288 residues: Small ribosomal subunit protein uS3 (288 aa).

Positions 38–106 constitute a KH type-2 domain; it reads IRRMMSKGLE…QVQLNIIEVK (69 aa). A disordered region spans residues 209-288; the sequence is PGRETPAEAP…TQPAETQQEG (80 aa). Residues 219 to 232 are compositionally biased toward basic and acidic residues; sequence SRPRRERGDRSERP. Over residues 249 to 264 the composition is skewed to low complexity; sequence AGRAAATTIAQAAETP. Polar residues predominate over residues 277–288; that stretch reads AATQPAETQQEG.

This sequence belongs to the universal ribosomal protein uS3 family. Part of the 30S ribosomal subunit. Forms a tight complex with proteins S10 and S14.

In terms of biological role, binds the lower part of the 30S subunit head. Binds mRNA in the 70S ribosome, positioning it for translation. The chain is Small ribosomal subunit protein uS3 from Salinispora arenicola (strain CNS-205).